Consider the following 293-residue polypeptide: Ribonuclease P/MRP protein subunit RPP1 (293 aa).

The protein belongs to the eukaryotic/archaeal RNase P protein component 3 family. In terms of assembly, component of nuclear RNase P and RNase MRP complexes. RNase P consists of an RNA moiety and at least 9 protein subunits including POP1, POP3, POP4, POP5, POP6, POP7, POP8, RPP1 and RPR2. RNase MRP complex consists of an RNA moiety and at least 10 protein subunits including POP1, POP3, POP4, POP5, POP6, POP7, POP8, RMP1, RPP1 and SNM1, many of which are shared with the RNase P complex.

The protein localises to the nucleus. The enzyme catalyses Endonucleolytic cleavage of RNA, removing 5'-extranucleotides from tRNA precursor.. Component of ribonuclease P, a protein complex that generates mature tRNA molecules by cleaving their 5'-ends. Also a component of RNase MRP, which cleaves pre-rRNA sequences. This is Ribonuclease P/MRP protein subunit RPP1 (RPP1) from Saccharomyces cerevisiae (strain ATCC 204508 / S288c) (Baker's yeast).